The chain runs to 512 residues: D-alanine--D-alanyl carrier protein ligase (512 aa).

152 to 153 is an ATP binding site; the sequence is TS. Asp-199 contacts D-alanine. Residue 294-299 participates in ATP binding; sequence NAYGPT. Val-303 is a D-alanine binding site. Residues Asp-385, 397–400, and Lys-499 contribute to the ATP site; that span reads YGGR. D-alanine is bound at residue Lys-499.

Belongs to the ATP-dependent AMP-binding enzyme family. DltA subfamily.

Its subcellular location is the cytoplasm. It catalyses the reaction holo-[D-alanyl-carrier protein] + D-alanine + ATP = D-alanyl-[D-alanyl-carrier protein] + AMP + diphosphate. Its pathway is cell wall biogenesis; lipoteichoic acid biosynthesis. Functionally, catalyzes the first step in the D-alanylation of lipoteichoic acid (LTA), the activation of D-alanine and its transfer onto the D-alanyl carrier protein (Dcp) DltC. In an ATP-dependent two-step reaction, forms a high energy D-alanyl-AMP intermediate, followed by transfer of the D-alanyl residue as a thiol ester to the phosphopantheinyl prosthetic group of the Dcp. D-alanylation of LTA plays an important role in modulating the properties of the cell wall in Gram-positive bacteria, influencing the net charge of the cell wall. In Streptococcus pyogenes serotype M49 (strain NZ131), this protein is D-alanine--D-alanyl carrier protein ligase.